We begin with the raw amino-acid sequence, 181 residues long: Protein CENTRORADIALIS (181 aa).

It belongs to the phosphatidylethanolamine-binding protein family. May form homodimers in solution.

The protein resides in the cytoplasm. In terms of biological role, expression of CEN leads to a morphological switch between shoot growth and the development of flower structures (inflorescence). May form complexes with phosphorylated ligands by interfering with kinases and their effectors. This is Protein CENTRORADIALIS (CEN) from Antirrhinum majus (Garden snapdragon).